Here is a 311-residue protein sequence, read N- to C-terminus: MQRLNPWHGTCRLQFSADADTTHHQGGCTAPFKLMRAERGNDGRCELPLLHSAGGLVGGDQLSVDLELGRNSRALITSVAAQKVYGSIGRSRLHPKGTWANQSVSCRLGSNSDLEWLPQELVVYADALVEQSLDVQLADDASFLSAEIVRLGRTAAGEDLGQGCWRSAVSLRRIGENGTRWEQVDRLELSGDALHHRHGLNGDAVFGTLIWAAPAPLTNPTLKSLLTNARNDRAGLEGQMQCSRLEQGLIARYVGPSSRDARFWFSRIWARTRAQRQLSEPRIPRVWPLQEQPLRQQVFIENIASSNAATH.

Belongs to the UreD family. UreD, UreF and UreG form a complex that acts as a GTP-hydrolysis-dependent molecular chaperone, activating the urease apoprotein by helping to assemble the nickel containing metallocenter of UreC. The UreE protein probably delivers the nickel.

The protein resides in the cytoplasm. In terms of biological role, required for maturation of urease via the functional incorporation of the urease nickel metallocenter. The protein is Urease accessory protein UreD of Synechococcus sp. (strain CC9902).